Reading from the N-terminus, the 382-residue chain is Mannitol-1-phosphate 5-dehydrogenase (382 aa).

An NAD(+)-binding site is contributed by 3–14 (ALHFGAGNIGRG).

It belongs to the mannitol dehydrogenase family.

It carries out the reaction D-mannitol 1-phosphate + NAD(+) = beta-D-fructose 6-phosphate + NADH + H(+). This is Mannitol-1-phosphate 5-dehydrogenase from Salmonella paratyphi A (strain ATCC 9150 / SARB42).